The following is a 188-amino-acid chain: MSETSKIPPASTEDTSAVVAPAAGPVSQWLQQQGFEHQALEPDHVGIEQIGVDAAVLPIIAAALKSNGFDYLQCHGGYDEGPGERLVCFYHLLAMAEQLEAMASDPAAQLREVRLKVFLSREGTPVLPSIYGLFRGADWQERETFDMYGIQFDGHPHPKRLLMPEDWKGWPLRKDYVQPDFYEMQDAY.

The protein belongs to the complex I 30 kDa subunit family. As to quaternary structure, NDH-1 can be composed of about 15 different subunits; different subcomplexes with different compositions have been identified which probably have different functions.

The protein localises to the cellular thylakoid membrane. It carries out the reaction a plastoquinone + NADH + (n+1) H(+)(in) = a plastoquinol + NAD(+) + n H(+)(out). The enzyme catalyses a plastoquinone + NADPH + (n+1) H(+)(in) = a plastoquinol + NADP(+) + n H(+)(out). NDH-1 shuttles electrons from an unknown electron donor, via FMN and iron-sulfur (Fe-S) centers, to quinones in the respiratory and/or the photosynthetic chain. The immediate electron acceptor for the enzyme in this species is believed to be plastoquinone. Couples the redox reaction to proton translocation, and thus conserves the redox energy in a proton gradient. Cyanobacterial NDH-1 also plays a role in inorganic carbon-concentration. This is NAD(P)H-quinone oxidoreductase subunit J from Parasynechococcus marenigrum (strain WH8102).